Consider the following 641-residue polypeptide: SUMO-activating enzyme subunit 2-A (641 aa).

ATP is bound by residues G24–G29, D48, N56–R59, K72, S95–I96, and D117–R122. The Zn(2+) site is built by C158 and C161. The Glycyl thioester intermediate role is filled by C173. Residues C439 and C442 each coordinate Zn(2+). The tract at residues G546–D641 is disordered. Basic and acidic residues predominate over residues V548–V561. Polar residues predominate over residues K562–A579. Acidic residues-rich tracts occupy residues Q582–S594 and P630–D641.

The protein belongs to the ubiquitin-activating E1 family. In terms of assembly, heterodimer of sae1 and uba2/sae2. The heterodimer corresponds to the two domains that are encoded on a single polypeptide chain in ubiquitin-activating enzyme E1. Interacts with ube2i.

The protein localises to the nucleus. Its pathway is protein modification; protein sumoylation. In terms of biological role, the heterodimer acts as an E1 ligase for sumo1, sumo2, and sumo3. It mediates ATP-dependent activation of sumo proteins followed by formation of a thioester bond between a sumo protein and a conserved active site cysteine residue on uba2/sae2. The polypeptide is SUMO-activating enzyme subunit 2-A (uba2-a) (Xenopus laevis (African clawed frog)).